The primary structure comprises 150 residues: 3-dehydroquinate dehydratase (150 aa).

Residue Tyr26 is the Proton acceptor of the active site. Asn75, His81, and Asp88 together coordinate substrate. The active-site Proton donor is His101. Substrate is bound by residues 102–103 (LS) and Arg112.

This sequence belongs to the type-II 3-dehydroquinase family. As to quaternary structure, homododecamer.

It catalyses the reaction 3-dehydroquinate = 3-dehydroshikimate + H2O. Its pathway is metabolic intermediate biosynthesis; chorismate biosynthesis; chorismate from D-erythrose 4-phosphate and phosphoenolpyruvate: step 3/7. Its function is as follows. Catalyzes a trans-dehydration via an enolate intermediate. In Shewanella loihica (strain ATCC BAA-1088 / PV-4), this protein is 3-dehydroquinate dehydratase.